Consider the following 194-residue polypeptide: Granulocyte colony-stimulating factor (194 aa).

The N-terminal stretch at K1–A20 is a signal peptide. Intrachain disulfides connect C56/C62 and C84/C94. T153 carries O-linked (GalNAc...) threonine glycosylation.

It belongs to the IL-6 superfamily. As to quaternary structure, monomer. O-glycosylated.

The protein resides in the secreted. Functionally, granulocyte/macrophage colony-stimulating factors are cytokines that act in hematopoiesis by controlling the production, differentiation, and function of 2 related white cell populations of the blood, the granulocytes and the monocytes-macrophages. This CSF induces granulocytes. This Felis catus (Cat) protein is Granulocyte colony-stimulating factor (CSF3).